Reading from the N-terminus, the 678-residue chain is Oviduct-specific glycoprotein (678 aa).

An N-terminal signal peptide occupies residues 1 to 21; it reads MWKLLLWVGLVLVLKHHDGAA. Residues 22 to 385 enclose the GH18 domain; it reads HKLVCYFTNW…YVLNDILVRA (364 aa). Residues C26 and C51 are joined by a disulfide bond. Residues 71 to 72, 98 to 101, Y142, 211 to 214, and W355 contribute to the chitin site; these read LQ, GGWN, and LSYD. N-linked (GlcNAc...) asparagine glycans are attached at residues N402 and N441. Positions 524 to 544 are disordered; the sequence is LTPVGHQSVTPVSHQSVSPGG. The span at 528 to 544 shows a compositional bias: polar residues; the sequence is GHQSVTPVSHQSVSPGG. 3 N-linked (GlcNAc...) asparagine glycosylation sites follow: N580, N596, and N648. Residues 581–606 form a disordered region; it reads ISVTPEGQTMPLRGENLTSEVGTHPR. Positions 651 to 662 are enriched in polar residues; sequence SVNSVTPQTSPL. The interval 651 to 678 is disordered; the sequence is SVNSVTPQTSPLSLKKEIPENSAVDEEA.

This sequence belongs to the glycosyl hydrolase 18 family. In terms of tissue distribution, oviduct.

Its subcellular location is the cytoplasmic vesicle. The protein resides in the secretory vesicle. Functionally, binds to oocyte zona pellucida in vivo. May play a role in the fertilization process and/or early embryonic development. This is Oviduct-specific glycoprotein (OVGP1) from Homo sapiens (Human).